The chain runs to 426 residues: Protein arginine N-methyltransferase 2 (426 aa).

2 disordered regions span residues 65 to 88 (DEEEDVKSNGVQTNGDRQTHGQES) and 155 to 175 (DEEMEEDGEQEQEQQDAAVAA). The segment covering 73–88 (NGVQTNGDRQTHGQES) has biased composition (polar residues). Acidic residues predominate over residues 155–168 (DEEMEEDGEQEQEQ). The RMT2 domain maps to 207–426 (PSVTSSRYLN…YRLPLCKYMD (220 aa)). Residues Tyr214, Met243, 263 to 268 (HGMGIV), 284 to 286 (EAH), 311 to 312 (WQ), and Asp331 contribute to the S-adenosyl-L-methionine site.

This sequence belongs to the class I-like SAM-binding methyltransferase superfamily. RMT2 methyltransferase family. Monomer.

Its subcellular location is the cytoplasm. It localises to the nucleus. In terms of biological role, S-adenosyl-L-methionine-dependent protein-arginine N-methyltransferase that methylates the delta-nitrogen atom of arginine residues to form N5-methylarginine (type IV) in target proteins. Monomethylates ribosomal protein L12. This Emericella nidulans (strain FGSC A4 / ATCC 38163 / CBS 112.46 / NRRL 194 / M139) (Aspergillus nidulans) protein is Protein arginine N-methyltransferase 2.